A 154-amino-acid chain; its full sequence is Myoglobin (154 aa).

The Globin domain occupies 2-148 (GLSDQEWQQV…FRNDMASKYK (147 aa)). His-65 serves as a coordination point for nitrite. His-65 is an O2 binding site. His-94 lines the heme b pocket.

In terms of assembly, monomeric.

Its subcellular location is the cytoplasm. The protein resides in the sarcoplasm. The enzyme catalyses Fe(III)-heme b-[protein] + nitric oxide + H2O = Fe(II)-heme b-[protein] + nitrite + 2 H(+). It catalyses the reaction H2O2 + AH2 = A + 2 H2O. Its function is as follows. Monomeric heme protein which primary function is to store oxygen and facilitate its diffusion within muscle tissues. Reversibly binds oxygen through a pentacoordinated heme iron and enables its timely and efficient release as needed during periods of heightened demand. Depending on the oxidative conditions of tissues and cells, and in addition to its ability to bind oxygen, it also has a nitrite reductase activity whereby it regulates the production of bioactive nitric oxide. Under stress conditions, like hypoxia and anoxia, it also protects cells against reactive oxygen species thanks to its pseudoperoxidase activity. The protein is Myoglobin (MB) of Struthio camelus (Common ostrich).